The sequence spans 99 residues: UPF0213 protein RBAM_000440 (99 aa).

The region spanning Asn4–Gln79 is the GIY-YIG domain.

This sequence belongs to the UPF0213 family.

This is UPF0213 protein RBAM_000440 from Bacillus velezensis (strain DSM 23117 / BGSC 10A6 / LMG 26770 / FZB42) (Bacillus amyloliquefaciens subsp. plantarum).